The following is a 364-amino-acid chain: Fructose-bisphosphate aldolase B (364 aa).

Ala-2 is modified (N-acetylalanine). Lys-13 carries the post-translational modification N6-succinyllysine. At Ser-36 the chain carries Phosphoserine. Thr-39 bears the Phosphothreonine mark. Beta-D-fructose 1,6-bisphosphate is bound at residue Arg-43. A Phosphoserine modification is found at Ser-89. Residue Thr-119 is modified to Phosphothreonine. Position 121 is an N6-succinyllysine (Lys-121). Ser-132 carries the post-translational modification Phosphoserine. The active-site Proton acceptor is the Glu-188. The active-site Schiff-base intermediate with dihydroxyacetone-P is Lys-230. Ser-272, Ser-276, Ser-299, and Ser-301 each carry phosphoserine. Residue 272 to 274 (SGG) participates in beta-D-fructose 1,6-bisphosphate binding. Residue Arg-304 coordinates beta-D-fructose 1,6-bisphosphate. Ser-309 carries the post-translational modification Phosphoserine. At Lys-317 the chain carries N6-succinyllysine.

Belongs to the class I fructose-bisphosphate aldolase family. In terms of assembly, homotetramer. Interacts with BBS1, BBS2, BBS4 and BBS7. Forms a ternary complex with G6PD and TP53; this interaction is direct.

It localises to the cytoplasm. The protein localises to the cytosol. It is found in the cytoskeleton. The protein resides in the microtubule organizing center. Its subcellular location is the centrosome. It localises to the centriolar satellite. It catalyses the reaction beta-D-fructose 1,6-bisphosphate = D-glyceraldehyde 3-phosphate + dihydroxyacetone phosphate. The catalysed reaction is beta-D-fructose 1-phosphate = D-glyceraldehyde + dihydroxyacetone phosphate. It participates in carbohydrate degradation; glycolysis; D-glyceraldehyde 3-phosphate and glycerone phosphate from D-glucose: step 4/4. The protein operates within carbohydrate biosynthesis; gluconeogenesis. It functions in the pathway carbohydrate metabolism; fructose metabolism. Its function is as follows. Catalyzes the aldol cleavage of fructose 1,6-biphosphate to form two triosephosphates dihydroxyacetone phosphate and D-glyceraldehyde 3-phosphate in glycolysis as well as the reverse stereospecific aldol addition reaction in gluconeogenesis. In fructolysis, metabolizes fructose 1-phosphate derived from the phosphorylation of dietary fructose by fructokinase into dihydroxyacetone phosphate and D-glyceraldehyde. Acts as an adapter independently of its enzymatic activity, exerts a tumor suppressor role by stabilizing the ternary complex with G6PD and TP53 to inhibit G6PD activity and keep oxidative pentose phosphate metabolism in check. In Oryctolagus cuniculus (Rabbit), this protein is Fructose-bisphosphate aldolase B (ALDOB).